The chain runs to 884 residues: Protein argonaute-4 (884 aa).

The region spanning 242–361 (PVIEFMCEVL…LPLEVCNIVA (120 aa)) is the PAZ domain. The region spanning 532 to 843 (LIVVILPGKT…VAFRARYHLV (312 aa)) is the Piwi domain. The tract at residues 848–870 (DSAEGSHVSGQSNGRDPQALAKA) is disordered.

Belongs to the argonaute family. Ago subfamily.

The protein resides in the cytoplasm. Its subcellular location is the P-body. In terms of biological role, required for RNA-mediated gene silencing (RNAi). Binds to short RNAs such as microRNAs (miRNAs) and represses the translation of mRNAs which are complementary to them. Lacks endonuclease activity and does not appear to cleave target mRNAs. The polypeptide is Protein argonaute-4 (ago4) (Xenopus laevis (African clawed frog)).